We begin with the raw amino-acid sequence, 258 residues long: Aspartate/glutamate leucyltransferase (258 aa).

The protein belongs to the R-transferase family. Bpt subfamily.

The protein localises to the cytoplasm. It carries out the reaction N-terminal L-glutamyl-[protein] + L-leucyl-tRNA(Leu) = N-terminal L-leucyl-L-glutamyl-[protein] + tRNA(Leu) + H(+). It catalyses the reaction N-terminal L-aspartyl-[protein] + L-leucyl-tRNA(Leu) = N-terminal L-leucyl-L-aspartyl-[protein] + tRNA(Leu) + H(+). Its function is as follows. Functions in the N-end rule pathway of protein degradation where it conjugates Leu from its aminoacyl-tRNA to the N-termini of proteins containing an N-terminal aspartate or glutamate. The sequence is that of Aspartate/glutamate leucyltransferase from Rhodopseudomonas palustris (strain TIE-1).